We begin with the raw amino-acid sequence, 467 residues long: Thiohydroximate-O-sulfate sulfur/sulfate-lyase (nitrile-forming) NSP3 (467 aa).

Residues alanine 2–leucine 143 form the Jacalin-type lectin domain. Kelch repeat units lie at residues lysine 177 to valine 225, threonine 230 to alanine 276, asparagine 280 to glycine 329, valine 331 to alanine 375, and histidine 379 to threonine 434. Residue arginine 237 is the Proton donor of the active site. Positions 237, 270, 292, 321, and 370 each coordinate a (Z)-N-(sulfonatooxy)alkanimidothioate. The active-site Proton donor is the arginine 292. Fe(2+)-binding residues include glutamate 386, aspartate 390, and histidine 394. Residue tryptophan 429 coordinates a (Z)-N-(sulfonatooxy)alkanimidothioate.

The protein belongs to the jacalin lectin family. The cofactor is Fe(2+). As to expression, mainly expressed in roots, and, at low levels, in seedlings and leaves. Observed in seeds.

The enzyme catalyses a (Z)-N-(sulfonatooxy)alkanimidothioate = a nitrile + sulfur + sulfate. It catalyses the reaction (Z)-phenyl-N-(sulfonatooxy)methanimidothioate = phenylacetonitrile + sulfur + sulfate. The catalysed reaction is (Z)-N-(sulfonatooxy)prop-2-enimidothioate = but-3-enenitrile + sulfur + sulfate. Specifier protein responsible for constitutive and herbivore-induced simple nitrile formation, especially in roots. Promotes simple nitriles, but not epithionitrile or thiocyanate formation. Converts allylglucosinolate and benzylglucosinolate (glucotropaeolin) to their corresponding simple nitriles in the presence of myrosinase. This chain is Thiohydroximate-O-sulfate sulfur/sulfate-lyase (nitrile-forming) NSP3, found in Arabidopsis thaliana (Mouse-ear cress).